The sequence spans 570 residues: Urease subunit alpha (570 aa).

The Urease domain occupies 132-570; that stretch reads GGIDTHVHFI…LPMAQRYFLF (439 aa). Ni(2+) is bound by residues histidine 137 and histidine 139. Substrate is bound by residues histidine 139 and alanine 170. Position 220 (lysine 220) interacts with Ni(2+). Lysine 220 bears the N6-carboxylysine mark. Substrate contacts are provided by histidine 222 and histidine 249. Residues histidine 249 and histidine 275 each coordinate Ni(2+). Histidine 323 serves as the catalytic Proton donor. Residue aspartate 363 participates in Ni(2+) binding. Alanine 366 provides a ligand contact to substrate.

This sequence belongs to the metallo-dependent hydrolases superfamily. Urease alpha subunit family. In terms of assembly, heterotrimer of UreA (gamma), UreB (beta) and UreC (alpha) subunits. Three heterotrimers associate to form the active enzyme. Ni cation is required as a cofactor. In terms of processing, carboxylation allows a single lysine to coordinate two nickel ions.

Its subcellular location is the cytoplasm. It catalyses the reaction urea + 2 H2O + H(+) = hydrogencarbonate + 2 NH4(+). It functions in the pathway nitrogen metabolism; urea degradation; CO(2) and NH(3) from urea (urease route): step 1/1. With respect to regulation, inhibited by fluoride. In Sporosarcina pasteurii (Bacillus pasteurii), this protein is Urease subunit alpha.